The primary structure comprises 402 residues: Centromere protein C (402 aa).

A Glycyl lysine isopeptide (Lys-Gly) (interchain with G-Cter in SUMO2) cross-link involves residue Lys-1. A compositionally biased stretch (low complexity) spans 1–12 (KSEQSSFSSSSS). Residues 1–118 (KSEQSSFSSS…HQKSQMSVET (118 aa)) are disordered. A Phosphoserine modification is found at Ser-5. A Nuclear localization signal motif is present at residues 25–42 (QKPPAEKTNQSSKNIGKK). Positions 44–53 (APFKKQKRAN) are enriched in basic residues. Over residues 88-118 (PNPSGDTGSSKNQDSMAAQNVHQKSQMSVET) the composition is skewed to polar residues. Lys-186 participates in a covalent cross-link: Glycyl lysine isopeptide (Lys-Gly) (interchain with G-Cter in SUMO2). Phosphothreonine is present on Thr-193. Residues 196–218 (VRRTMRTRSKPLEYWRGERIDYQ) form an MIF2 homology domain II region. 2 positions are modified to phosphoserine: Ser-222 and Ser-232. A Nuclear localization signal motif is present at residues 239 to 257 (KRKAKGNLGRIITTANRKR). Residue Lys-266 forms a Glycyl lysine isopeptide (Lys-Gly) (interchain with G-Cter in SUMO2) linkage. The segment at 349–402 (LVFYVNLGYLLCTLHETPYIVTTGDSFYVPSGNYYNIKNLLNEERVLLFTQIKS) is MIF2 homology domain III.

The protein belongs to the CENP-C/MIF2 family. In terms of assembly, oligomer. Component of the CENPA-NAC complex, at least composed of CENPA, CENPC, CENPH, CENPM, CENPN, CENPT and CENPU. The CENPA-NAC complex interacts with the CENPA-CAD complex, composed of CENPI, CENPK, CENPL, CENPO, CENPP, CENPQ, CENPR and CENPS. Binds to DAXX. Interacts with DNMT3B. Interacts directly with CENPA. Identified in a centromere complex containing histones H2A, H2B and H4, and at least CENPA, CENPB, CENPC, CENPT, CENPN, HJURP, SUPT16H, SSRP1 and RSF1. Interacts with MEIKIN.

The protein localises to the nucleus. It localises to the chromosome. Its subcellular location is the centromere. The protein resides in the kinetochore. Its function is as follows. Component of the CENPA-NAC (nucleosome-associated) complex, a complex that plays a central role in assembly of kinetochore proteins, mitotic progression and chromosome segregation. The CENPA-NAC complex recruits the CENPA-CAD (nucleosome distal) complex and may be involved in incorporation of newly synthesized CENPA into centromeres. CENPC recruits DNA methylation and DNMT3B to both centromeric and pericentromeric satellite repeats and regulates the histone code in these regions. This is Centromere protein C (CENPC) from Ovis aries (Sheep).